The sequence spans 678 residues: Probable antibacterial peptide polyprotein (678 aa).

14 repeat units span residues 1 to 67 (MRSP…PEVR), 68 to 114 (ERRS…PEVR), 115 to 161 (ERRS…PEVR), 162 to 208 (ERRS…PEVR), 209 to 255 (ERRS…PEVR), 256 to 302 (ERGS…PEVR), 303 to 349 (ERRS…PEVR), 350 to 396 (ERRS…PEVR), 397 to 443 (ERRS…PEVR), 444 to 490 (ERRS…PEVR), 491 to 537 (ERRS…PEVR), 538 to 584 (ERRS…PEVR), 585 to 631 (ERRS…PEVR), and 632 to 678 (ERRS…PEVR). Residues 1–678 (MRSPRVIHLA…SEGVVLPEVR (678 aa)) form a 14 X approximate tandem repeats region. Residue Thr32 is glycosylated (O-linked (GalNAc...) threonine). Disordered stretches follow at residues 58–97 (SEAE…DASL) and 113–678 (VRER…PEVR). The segment covering 64 to 73 (PEVRERRSPV) has biased composition (basic and acidic residues). Thr83 and Thr130 each carry an O-linked (GalNAc...) threonine glycan. A compositionally biased stretch (low complexity) spans 145–157 (ESELSPLSEAEVL). Residues 158–167 (PEVRERRSPV) are compositionally biased toward basic and acidic residues. Thr177 carries O-linked (GalNAc...) threonine glycosylation. Positions 188–204 (VASLESELSPLSEAEVL) are enriched in low complexity. Basic and acidic residues predominate over residues 205-214 (PEVRERRSPV). O-linked (GalNAc...) threonine glycosylation is found at Thr224 and Thr271. Positions 299–308 (PEVRERRSPV) are enriched in basic and acidic residues. The O-linked (GalNAc...) threonine glycan is linked to Thr318. The span at 333-345 (ESELSPLSEAEVL) shows a compositional bias: low complexity. Residues 346-355 (PEVRERRSPV) are compositionally biased toward basic and acidic residues. Residue Thr365 is glycosylated (O-linked (GalNAc...) threonine). The span at 380 to 392 (ESELSPLSEAEVL) shows a compositional bias: low complexity. The span at 393 to 402 (PEVRERRSPV) shows a compositional bias: basic and acidic residues. An O-linked (GalNAc...) threonine glycan is attached at Thr412. A compositionally biased stretch (low complexity) spans 427–439 (ESELSPLSEAEVL). The span at 440-449 (PEVRERRSPV) shows a compositional bias: basic and acidic residues. Thr459 carries an O-linked (GalNAc...) threonine glycan. Positions 474–486 (ESELSPLSEAEVL) are enriched in low complexity. Positions 487–496 (PEVRERRSPV) are enriched in basic and acidic residues. Residue Thr506 is glycosylated (O-linked (GalNAc...) threonine). A compositionally biased stretch (low complexity) spans 521–533 (ESELSPSSEAEVL). A compositionally biased stretch (basic and acidic residues) spans 534 to 543 (PEVRERRSPV). An O-linked (GalNAc...) threonine glycan is attached at Thr553. Residues 568-580 (ESELSPLSEAEVL) show a composition bias toward low complexity. A compositionally biased stretch (basic and acidic residues) spans 581–590 (PEVRERRSPV). O-linked (GalNAc...) threonine glycosylation occurs at Thr600. Positions 615-627 (ESELSPLSEAEGL) are enriched in low complexity. Thr647 carries O-linked (GalNAc...) threonine glycosylation.

It localises to the secreted. Functionally, has antibacterial activity in vitro. The chain is Probable antibacterial peptide polyprotein from Riptortus clavatus (Bean bug).